Here is a 201-residue protein sequence, read N- to C-terminus: MIGRLHGKIIEKQPPEMVIDVQGVGYEVLLPMTSFYSLPQIGEEATIFTHLVVREDAHLLFGFAQKQDRTLFRELIKTNGVGPKLALAILSAMSVSQFANAVEHEELAKLTKIPGIGRKTAERLLVELKGKFKGVAQSDFFEEHSVETIVATHSHDPADEARDALVALGYKLADAEKMIKKVNKAGATSEQLIREALKASL.

The domain I stretch occupies residues 1 to 64 (MIGRLHGKII…EDAHLLFGFA (64 aa)). The segment at 65–143 (QKQDRTLFRE…GVAQSDFFEE (79 aa)) is domain II. A flexible linker region spans residues 144–154 (HSVETIVATHS). Positions 154-201 (SHDPADEARDALVALGYKLADAEKMIKKVNKAGATSEQLIREALKASL) are domain III.

It belongs to the RuvA family. Homotetramer. Forms an RuvA(8)-RuvB(12)-Holliday junction (HJ) complex. HJ DNA is sandwiched between 2 RuvA tetramers; dsDNA enters through RuvA and exits via RuvB. An RuvB hexamer assembles on each DNA strand where it exits the tetramer. Each RuvB hexamer is contacted by two RuvA subunits (via domain III) on 2 adjacent RuvB subunits; this complex drives branch migration. In the full resolvosome a probable DNA-RuvA(4)-RuvB(12)-RuvC(2) complex forms which resolves the HJ.

The protein localises to the cytoplasm. In terms of biological role, the RuvA-RuvB-RuvC complex processes Holliday junction (HJ) DNA during genetic recombination and DNA repair, while the RuvA-RuvB complex plays an important role in the rescue of blocked DNA replication forks via replication fork reversal (RFR). RuvA specifically binds to HJ cruciform DNA, conferring on it an open structure. The RuvB hexamer acts as an ATP-dependent pump, pulling dsDNA into and through the RuvAB complex. HJ branch migration allows RuvC to scan DNA until it finds its consensus sequence, where it cleaves and resolves the cruciform DNA. The protein is Holliday junction branch migration complex subunit RuvA of Actinobacillus pleuropneumoniae serotype 7 (strain AP76).